Consider the following 58-residue polypeptide: Ribosome modulation factor (58 aa).

It belongs to the ribosome modulation factor family.

It is found in the cytoplasm. In terms of biological role, during stationary phase, converts 70S ribosomes to an inactive dimeric form (100S ribosomes). This chain is Ribosome modulation factor, found in Shewanella amazonensis (strain ATCC BAA-1098 / SB2B).